Here is a 65-residue protein sequence, read N- to C-terminus: Oxiana weak toxin (65 aa).

Disulfide bonds link Cys3/Cys24, Cys6/Cys11, Cys17/Cys42, Cys46/Cys57, and Cys58/Cys63.

The protein belongs to the three-finger toxin family. Ancestral subfamily. Orphan group II sub-subfamily. In terms of tissue distribution, expressed by the venom gland.

The protein localises to the secreted. Functionally, binds to muscle and neuronal nicotinic acetylcholine receptors (nAChR). It binds to extracellular domain of rat alpha-7/CHRNA7 nAChR (IC(50)=2.2 uM) and to Torpedo californica membranes (IC(50)=30 uM). The sequence is that of Oxiana weak toxin from Naja oxiana (Central Asian cobra).